The following is a 382-amino-acid chain: Beta-1,4-galactosyltransferase 6 (382 aa).

Topologically, residues M1–L15 are cytoplasmic. Residues I16 to A35 form a helical; Signal-anchor for type II membrane protein membrane-spanning segment. At P36–Y382 the chain is on the lumenal side. Residues N71, N75, N83, N84, N99, and N122 are each glycosylated (N-linked (GlcNAc...) asparagine). C108 and C152 are oxidised to a cystine. UDP-alpha-D-galactose is bound by residues P163 to R167, F202 to R204, V229 to D230, Y258, and W290. Residues C223 and C242 are joined by a disulfide bond. D230 serves as a coordination point for Mn(2+). G292–D295 is a binding site for N-acetyl-D-glucosamine. N307 is a glycosylation site (N-linked (GlcNAc...) asparagine). H323 contacts Mn(2+). Residue H323 to H324 participates in UDP-alpha-D-galactose binding. R334 contributes to the N-acetyl-D-glucosamine binding site. N367 carries an N-linked (GlcNAc...) asparagine glycan.

It belongs to the glycosyltransferase 7 family. Mn(2+) serves as cofactor. The cofactor is Mg(2+). Requires Ca(2+) as cofactor. In terms of tissue distribution, brain and kidney.

It localises to the golgi apparatus. Its subcellular location is the golgi stack membrane. It catalyses the reaction a beta-D-glucosyl-(1&lt;-&gt;1')-N-acylsphing-4-enine + UDP-alpha-D-galactose = a beta-D-Gal-(1-&gt;4)-beta-D-Glc-(1&lt;-&gt;1)-Cer(d18:1(4E)) + UDP + H(+). Its pathway is protein modification; protein glycosylation. It participates in sphingolipid metabolism. With respect to regulation, inhibited by EDTA. Its function is as follows. Catalyzes the synthesis of lactosylceramide (LacCer) via the transfer of galactose from UDP-galactose to glucosylceramide (GlcCer). LacCer is the starting point in the biosynthesis of all gangliosides (membrane-bound glycosphingolipids) which play pivotal roles in the CNS including neuronal maturation and axonal and myelin formation. This is Beta-1,4-galactosyltransferase 6 from Mus musculus (Mouse).